We begin with the raw amino-acid sequence, 363 residues long: Histidinol-phosphate aminotransferase (363 aa).

Lys-220 is subject to N6-(pyridoxal phosphate)lysine.

The protein belongs to the class-II pyridoxal-phosphate-dependent aminotransferase family. Histidinol-phosphate aminotransferase subfamily. As to quaternary structure, homodimer. Pyridoxal 5'-phosphate serves as cofactor.

It carries out the reaction L-histidinol phosphate + 2-oxoglutarate = 3-(imidazol-4-yl)-2-oxopropyl phosphate + L-glutamate. Its pathway is amino-acid biosynthesis; L-histidine biosynthesis; L-histidine from 5-phospho-alpha-D-ribose 1-diphosphate: step 7/9. This is Histidinol-phosphate aminotransferase from Paramagnetospirillum magneticum (strain ATCC 700264 / AMB-1) (Magnetospirillum magneticum).